Reading from the N-terminus, the 81-residue chain is Photosystem I iron-sulfur center (81 aa).

4Fe-4S ferredoxin-type domains follow at residues 2 to 31 (SHSVKIYDTCIGCTQCVRACPTDVLEMIPW) and 39 to 68 (IASAPRTEDCVGCKRCESACPTDFLSVRVY). Residues Cys-11, Cys-14, Cys-17, Cys-21, Cys-48, Cys-51, Cys-54, and Cys-58 each contribute to the [4Fe-4S] cluster site.

In terms of assembly, the eukaryotic PSI reaction center is composed of at least 11 subunits. It depends on [4Fe-4S] cluster as a cofactor.

Its subcellular location is the plastid. The protein localises to the chloroplast thylakoid membrane. The catalysed reaction is reduced [plastocyanin] + hnu + oxidized [2Fe-2S]-[ferredoxin] = oxidized [plastocyanin] + reduced [2Fe-2S]-[ferredoxin]. Its function is as follows. Apoprotein for the two 4Fe-4S centers FA and FB of photosystem I (PSI); essential for photochemical activity. FB is the terminal electron acceptor of PSI, donating electrons to ferredoxin. The C-terminus interacts with PsaA/B/D and helps assemble the protein into the PSI complex. Required for binding of PsaD and PsaE to PSI. PSI is a plastocyanin-ferredoxin oxidoreductase, converting photonic excitation into a charge separation, which transfers an electron from the donor P700 chlorophyll pair to the spectroscopically characterized acceptors A0, A1, FX, FA and FB in turn. This Sorghum bicolor (Sorghum) protein is Photosystem I iron-sulfur center.